The sequence spans 822 residues: Putative endoplasmic reticulum metallopeptidase 1 (822 aa).

Residues 1 to 14 lie on the Cytoplasmic side of the membrane; sequence MVLVCASSSKCKRN. A helical membrane pass occupies residues 15–35; sequence TFLQLAMVLFAVVMARIALYF. At 36-365 the chain is on the lumenal side; the sequence is HNHLDEPLVD…FNSLFFMYSK (330 aa). An N-linked (GlcNAc...) asparagine glycan is attached at Asn-146. Residues His-161 and Asp-173 each coordinate Zn(2+). Glu-207 serves as the catalytic Proton acceptor. Positions 208 and 234 each coordinate Zn(2+). N-linked (GlcNAc...) asparagine glycosylation occurs at Asn-291. His-307 lines the Zn(2+) pocket. Residues 366–384 form a helical membrane-spanning segment; sequence LTSKILNTLVGGLGILLTL. Topologically, residues 385-392 are cytoplasmic; the sequence is RGSEGSFT. The chain crosses the membrane as a helical span at residues 393-413; sequence VALIAQVISIAGIFVIPNIWA. Residues 414–431 lie on the Lumenal side of the membrane; the sequence is YILGNVLDCGMSWFRNEY. Residues 432 to 452 form a helical membrane-spanning segment; it reads WPLFIYLPAIFASLFFTESLF. Over 453-463 the chain is Cytoplasmic; it reads KRSEHLALRAT. The chain crosses the membrane as a helical span at residues 464–484; the sequence is IFIFSLLTFIPLPSAYLFTII. A topological domain (lumenal) is located at residue Asp-485. A helical transmembrane segment spans residues 486–506; it reads FFMVFALFLNDKILAKPGTVH. The Cytoplasmic segment spans residues 507-514; sequence PLTYFIGS. The helical transmembrane segment at 515 to 535 threads the bilayer; that stretch reads IGAMTVGFESAINLLEIFVPL. Residues 536 to 547 lie on the Lumenal side of the membrane; that stretch reads TGRIGTDKVADN. Residues 548-568 form a helical membrane-spanning segment; it reads VVATVCVCGFNIYFPLMSPWI. Over 569 to 575 the chain is Cytoplasmic; sequence QRFRSRC. A helical membrane pass occupies residues 576-596; that stretch reads CFRLGLLFSIFVVGFSSFILA. Residues 597 to 822 are Lumenal-facing; it reads KQDTYYDSLH…GVVSGNFKLE (226 aa). N-linked (GlcNAc...) asparagine glycosylation is found at Asn-617, Asn-682, Asn-706, and Asn-758.

This sequence belongs to the peptidase M28 family. M28B subfamily. It depends on Zn(2+) as a cofactor.

It is found in the endoplasmic reticulum membrane. This is Putative endoplasmic reticulum metallopeptidase 1 from Schizosaccharomyces pombe (strain 972 / ATCC 24843) (Fission yeast).